Here is a 274-residue protein sequence, read N- to C-terminus: MSRIARRFAALKAQDRGALIPYLQACDPDYETSLALLRAMPGAGADLIEIGVPFSDPSADGPTIQAAARRGLAAGATMARVLEMVTRFREGDADTPIVLMGYLNPIEAYGPARFCADAARAGVDGLIVVDLPPEEADLLEGPAADHGLDIIRLVAPTTDDTRLPLVCRHASGFIYYVSITGVTGTRTASADELAQALPRLRAATDLPVAIGFGIRTPEQAAAAVRVADAAVVASALIATLEDSLDAEGRAGPDTLKRVLAQLEALGRAVRNART.

Catalysis depends on proton acceptor residues E49 and D60.

This sequence belongs to the TrpA family. As to quaternary structure, tetramer of two alpha and two beta chains.

The enzyme catalyses (1S,2R)-1-C-(indol-3-yl)glycerol 3-phosphate + L-serine = D-glyceraldehyde 3-phosphate + L-tryptophan + H2O. The protein operates within amino-acid biosynthesis; L-tryptophan biosynthesis; L-tryptophan from chorismate: step 5/5. Functionally, the alpha subunit is responsible for the aldol cleavage of indoleglycerol phosphate to indole and glyceraldehyde 3-phosphate. The sequence is that of Tryptophan synthase alpha chain from Gluconacetobacter diazotrophicus (strain ATCC 49037 / DSM 5601 / CCUG 37298 / CIP 103539 / LMG 7603 / PAl5).